The chain runs to 465 residues: Pancreatic triacylglycerol lipase (465 aa).

The signal sequence occupies residues 1–16 (MLLLWALPLLLGAVAG). 2 disulfide bridges follow: Cys-20-Cys-26 and Cys-108-Cys-119. Residue Ser-170 is the Nucleophile of the active site. Residue Asp-194 is the Charge relay system of the active site. Residues Glu-205, Arg-208, Asp-210, and Asp-213 each coordinate Ca(2+). A disulfide bond links Cys-255 and Cys-279. His-281 acts as the Charge relay system in catalysis. 3 disulfides stabilise this stretch: Cys-303/Cys-314, Cys-317/Cys-321, and Cys-449/Cys-465. Residues 355–465 (WRYQVAVTLS…EDILLTLTPC (111 aa)) form the PLAT domain.

The protein belongs to the AB hydrolase superfamily. Lipase family. As to quaternary structure, forms a 1:1 stoichiometric complex with (pro)colipase/CLPS.

It localises to the secreted. It catalyses the reaction a triacylglycerol + H2O = a diacylglycerol + a fatty acid + H(+). The enzyme catalyses 1,2,3-tributanoylglycerol + H2O = dibutanoylglycerol + butanoate + H(+). It carries out the reaction 1,2,3-tri-(9Z-octadecenoyl)-glycerol + H2O = di-(9Z)-octadecenoylglycerol + (9Z)-octadecenoate + H(+). The catalysed reaction is all-trans-retinyl hexadecanoate + H2O = all-trans-retinol + hexadecanoate + H(+). It catalyses the reaction 1,2-di-(9Z-octadecenoyl)-glycerol + H2O = (9Z-octadecenoyl)-glycerol + (9Z)-octadecenoate + H(+). Its activity is regulated as follows. Inhibited by bile salts, is reactivated by (pro)colipase/CLPS. Its function is as follows. Plays an important role in fat metabolism. It preferentially splits the esters of long-chain fatty acids at positions 1 and 3, producing mainly 2-monoacylglycerol and free fatty acids, and shows considerably higher activity against insoluble emulsified substrates than against soluble ones. The polypeptide is Pancreatic triacylglycerol lipase (PNLIP) (Oryctolagus cuniculus (Rabbit)).